The following is a 382-amino-acid chain: Dual-specificity RNA methyltransferase RlmN (382 aa).

Glu96 acts as the Proton acceptor in catalysis. A Radical SAM core domain is found at 102-342 (QGKRGTLCVS…VRTTRGEDID (241 aa)). Cys109 and Cys345 form a disulfide bridge. 3 residues coordinate [4Fe-4S] cluster: Cys116, Cys120, and Cys123. Residues 170–171 (GE), Ser202, 224–226 (SLH), and Asn302 each bind S-adenosyl-L-methionine. The active-site S-methylcysteine intermediate is the Cys345.

The protein belongs to the radical SAM superfamily. RlmN family. The cofactor is [4Fe-4S] cluster.

The protein resides in the cytoplasm. It carries out the reaction adenosine(2503) in 23S rRNA + 2 reduced [2Fe-2S]-[ferredoxin] + 2 S-adenosyl-L-methionine = 2-methyladenosine(2503) in 23S rRNA + 5'-deoxyadenosine + L-methionine + 2 oxidized [2Fe-2S]-[ferredoxin] + S-adenosyl-L-homocysteine. It catalyses the reaction adenosine(37) in tRNA + 2 reduced [2Fe-2S]-[ferredoxin] + 2 S-adenosyl-L-methionine = 2-methyladenosine(37) in tRNA + 5'-deoxyadenosine + L-methionine + 2 oxidized [2Fe-2S]-[ferredoxin] + S-adenosyl-L-homocysteine. Its function is as follows. Specifically methylates position 2 of adenine 2503 in 23S rRNA and position 2 of adenine 37 in tRNAs. m2A2503 modification seems to play a crucial role in the proofreading step occurring at the peptidyl transferase center and thus would serve to optimize ribosomal fidelity. This Pseudomonas fluorescens (strain SBW25) protein is Dual-specificity RNA methyltransferase RlmN.